We begin with the raw amino-acid sequence, 146 residues long: Putative pre-16S rRNA nuclease (146 aa).

It belongs to the YqgF nuclease family.

Its subcellular location is the cytoplasm. Could be a nuclease involved in processing of the 5'-end of pre-16S rRNA. This is Putative pre-16S rRNA nuclease from Methylobacillus flagellatus (strain ATCC 51484 / DSM 6875 / VKM B-1610 / KT).